The primary structure comprises 248 residues: 14-3-3 protein sigma (248 aa).

Residues S5, S74, and S248 each carry the phosphoserine modification.

It belongs to the 14-3-3 family. Homodimer. Interacts with KRT17 and SAMSN1. Found in a complex with XPO7, EIF4A1, ARHGAP1, VPS26A, VPS29 and VPS35. Interacts with GAB2. Interacts with SRPK2. Interacts with COPS6. Interacts with COP1; this interaction leads to proteasomal degradation. Interacts with the 'Thr-369' phosphorylated form of DAPK2. Interacts with PI4KB. Interacts with SLITRK1. Interacts with LRRK2; this interaction is dependent on LRRK2 phosphorylation. Interacts with PKP3 (via N-terminus); the interaction maintains the cytoplasmic pool of PKP3, facilitates PKP3 exchange at desmosomes and restricts PKP3 localization to existing desmosome cell junctions. Interacts with LCP2. Post-translationally, ubiquitinated. Ubiquitination by RFFL induces proteasomal degradation and indirectly regulates p53/TP53 activation. In terms of tissue distribution, present mainly in tissues enriched in stratified squamous keratinizing epithelium.

It localises to the cytoplasm. It is found in the nucleus. The protein resides in the secreted. Adapter protein implicated in the regulation of a large spectrum of both general and specialized signaling pathways. Binds to a large number of partners, usually by recognition of a phosphoserine or phosphothreonine motif. Binding generally results in the modulation of the activity of the binding partner. Promotes cytosolic retention of GBP1 GTPase by binding to phosphorylated GBP1, thereby inhibiting the innate immune response. Also acts as a TP53/p53-regulated inhibitor of G2/M progression. When bound to KRT17, regulates protein synthesis and epithelial cell growth by stimulating Akt/mTOR pathway. Acts to maintain desmosome cell junction adhesion in epithelial cells via interacting with and sequestering PKP3 to the cytoplasm, thereby restricting its translocation to existing desmosome structures and therefore maintaining desmosome protein homeostasis. Also acts to facilitate PKP3 exchange at desmosome plaques, thereby maintaining keratinocyte intercellular adhesion. May also regulate MDM2 autoubiquitination and degradation and thereby activate p53/TP53. The polypeptide is 14-3-3 protein sigma (SFN) (Homo sapiens (Human)).